The chain runs to 190 residues: ATP synthase subunit b (190 aa).

A helical membrane pass occupies residues 4 to 24; it reads ILAPVLSLVLIAGVASPALAA.

The protein belongs to the ATPase B chain family. In terms of assembly, F-type ATPases have 2 components, F(1) - the catalytic core - and F(0) - the membrane proton channel. F(1) has five subunits: alpha(3), beta(3), gamma(1), delta(1), epsilon(1). F(0) has three main subunits: a(1), b(2) and c(10-14). The alpha and beta chains form an alternating ring which encloses part of the gamma chain. F(1) is attached to F(0) by a central stalk formed by the gamma and epsilon chains, while a peripheral stalk is formed by the delta and b chains.

It is found in the cell inner membrane. F(1)F(0) ATP synthase produces ATP from ADP in the presence of a proton or sodium gradient. F-type ATPases consist of two structural domains, F(1) containing the extramembraneous catalytic core and F(0) containing the membrane proton channel, linked together by a central stalk and a peripheral stalk. During catalysis, ATP synthesis in the catalytic domain of F(1) is coupled via a rotary mechanism of the central stalk subunits to proton translocation. Functionally, component of the F(0) channel, it forms part of the peripheral stalk, linking F(1) to F(0). The polypeptide is ATP synthase subunit b (Ruegeria pomeroyi (strain ATCC 700808 / DSM 15171 / DSS-3) (Silicibacter pomeroyi)).